A 735-amino-acid polypeptide reads, in one-letter code: Disintegrin and metalloproteinase domain-containing protein 2 (735 aa).

Residues 1 to 16 (MWRVLFLLSGLGGLRM) form the signal peptide. Residues 17–174 (DSNFDSLPVQ…FKLQSVEPQQ (158 aa)) constitute a propeptide that is removed on maturation. 2 N-linked (GlcNAc...) asparagine glycosylation sites follow: Asn122 and Asn220. Residues 175–686 (DFAKYIEMHV…ENIYHSKPMR (512 aa)) are Extracellular-facing. In terms of domain architecture, Peptidase M12B spans 178–375 (KYIEMHVIVE…QKSQCLHNQP (198 aa)). Cystine bridges form between Cys287–Cys370, Cys329–Cys354, Cys331–Cys336, and Cys445–Cys465. N-linked (GlcNAc...) asparagine glycans are attached at residues Asn353, Asn459, and Asn566. Residues 384–473 (QAVCGNAKLE…SCPENHYVQT (90 aa)) form the Disintegrin domain. Residues 612–645 (LGYDCTTDKCNDRGVCNNKKHCHCSASYLPPDCS) enclose the EGF-like domain. Intrachain disulfides connect Cys616–Cys627, Cys621–Cys633, and Cys635–Cys644. The helical transmembrane segment at 687 to 707 (WPFFLFIPFFIIFCVLIAIMV) threads the bilayer. Topologically, residues 708–735 (KVNFQRKKWRTEDYSSDEQPESESEPKG) are cytoplasmic. Ser729 is subject to Phosphoserine.

Post-translationally, the prodomain and the metalloprotease domain are cleaved during the epididymal maturation of the spermatozoa. Expressed specifically in spermatogenic cells in the seminiferous cells. Not detected in fetal tissues.

It localises to the membrane. Functionally, sperm surface membrane protein that may be involved in sperm-egg plasma membrane adhesion and fusion during fertilization. Could have a direct role in sperm-zona binding or migration of sperm from the uterus into the oviduct. Interactions with egg membrane could be mediated via binding between its disintegrin-like domain to one or more integrins receptors on the egg. This is a non catalytic metalloprotease-like protein. This is Disintegrin and metalloproteinase domain-containing protein 2 (ADAM2) from Homo sapiens (Human).